The chain runs to 427 residues: Riboflavin transporter rft-1 (427 aa).

Residues 1–2 (MK) lie on the Cytoplasmic side of the membrane. Residues 3-23 (TFLFTFCLVAIFGSSSWIGTN) traverse the membrane as a helical segment. Residues 24–42 (SVWMELSLLTAKLPEGWNL) are Extracellular-facing. The chain crosses the membrane as a helical span at residues 43–63 (PSYLSAIVQIACLGPLIYSII). Residues 64–73 (HKGIKMTIPT) lie on the Cytoplasmic side of the membrane. A helical transmembrane segment spans residues 74-94 (VPLIFIFMVLACICQLGLCFF). Over 95-111 (WDDTGYIFGAIRSWPLY) the chain is Extracellular. The chain crosses the membrane as a helical span at residues 112–132 (LLLFGLAIVDAISSVLFLPFM). Over 133 to 139 (AQFHPSF) the chain is Cytoplasmic. Residues 140–160 (LNAYFVGMGLSALIPSLLSLI) traverse the membrane as a helical segment. Over 161 to 184 (QGTSNYWCDDNKTPHYYPPRFSVS) the chain is Extracellular. A helical transmembrane segment spans residues 185–205 (MFFLINFFFTCAAVAAFLVLY). Residues 206 to 261 (KIGAHKNSSQVEPEPKHSIQIIQGDSTTDVNEVNTESSFQETSSIPDSSSATGARL) lie on the Cytoplasmic side of the membrane. Residues 262-282 (AFLLLTTALVNAQMNGIVTSV) form a helical membrane-spanning segment. The Extracellular portion of the chain corresponds to 283 to 297 (QSYATLVYSQNTYHY). The chain crosses the membrane as a helical span at residues 298 to 318 (AVTLSNVISPLASYLQFFVKI). The Cytoplasmic segment spans residues 319–322 (RSLP). Residues 323 to 343 (ILAFLTLCSSLTTAVIIYLAA) traverse the membrane as a helical segment. Residues 344–353 (LSPNWIFNSE) lie on the Extracellular side of the membrane. Residues 354–374 (TAGTIISIASSLIAAGLHSYL) traverse the membrane as a helical segment. Topologically, residues 375–391 (RVMFAALLREGNQKESR) are cytoplasmic. The helical transmembrane segment at 392–412 (LFWCGAFIQIGSFTGSAIMFP) threads the bilayer. Residues 413 to 427 (LVNVWKLFHSAPSCR) lie on the Extracellular side of the membrane.

The protein belongs to the riboflavin transporter family. As to expression, expressed in intestine.

The protein localises to the cell membrane. It carries out the reaction riboflavin(in) = riboflavin(out). With respect to regulation, activity is strongly inhibited by riboflavin analogs, such as lumiflavin and lumichrome. Its function is as follows. Riboflavin transporter. Riboflavin transport is Na(+)-independent but pH-sensitive. In Caenorhabditis elegans, this protein is Riboflavin transporter rft-1.